A 540-amino-acid polypeptide reads, in one-letter code: Probable LRR receptor-like serine/threonine-protein kinase RPK1 (540 aa).

Positions 1 to 19 (MKLLGLVFLLFNLFMFSFS) are cleaved as a signal peptide. Residues 20–198 (RKLLTESGGG…PGKSGLYPIE (179 aa)) lie on the Extracellular side of the membrane. LRR repeat units follow at residues 118–142 (LSEI…IWGL) and 144–169 (KLEI…VLRK). The helical transmembrane segment at 199–219 (IASIVSASVIVFVLLVLVILF) threads the bilayer. At 220–540 (IYTRKWKRNS…LLKRIQPSRL (321 aa)) the chain is on the cytoplasmic side. Residues T250 and T258 each carry the phosphothreonine modification. One can recognise a Protein kinase domain in the interval 261–535 (FSNSNCIGHG…KQAVRLLKRI (275 aa)). ATP is bound by residues 267–275 (IGHGGFGST) and K289. Phosphotyrosine occurs at positions 334 and 372. The Proton acceptor role is filled by D385. Y427 bears the Phosphotyrosine mark. T435 is subject to Phosphothreonine.

It belongs to the protein kinase superfamily. Ser/Thr protein kinase family. Expressed in roots, stems, leaves, and flowers.

It localises to the cell membrane. The enzyme catalyses L-seryl-[protein] + ATP = O-phospho-L-seryl-[protein] + ADP + H(+). The catalysed reaction is L-threonyl-[protein] + ATP = O-phospho-L-threonyl-[protein] + ADP + H(+). Its function is as follows. Involved in the main abscisic acid-mediated (ABA) signaling pathway and in early ABA perception. Together with RPK2, required for pattern formation along the radial axis (e.g. the apical embryonic domain cell types that generate cotyledon primordia), and the apical-basal axis (e.g. differentiation of the basal pole during early embryogenesis). This chain is Probable LRR receptor-like serine/threonine-protein kinase RPK1 (RPK1), found in Arabidopsis thaliana (Mouse-ear cress).